The chain runs to 169 residues: Cell division inhibitor SulA (169 aa).

Residues A106 to Y112 are ftsZ binding. The segment at K162–H169 is lon protease binding.

The protein belongs to the SulA family. In terms of assembly, interacts with FtsZ. Is rapidly cleaved and degraded by the Lon protease once DNA damage is repaired.

Its function is as follows. Component of the SOS system and an inhibitor of cell division. Accumulation of SulA causes rapid cessation of cell division and the appearance of long, non-septate filaments. In the presence of GTP, binds a polymerization-competent form of FtsZ in a 1:1 ratio, thus inhibiting FtsZ polymerization and therefore preventing it from participating in the assembly of the Z ring. This mechanism prevents the premature segregation of damaged DNA to daughter cells during cell division. In Salmonella dublin (strain CT_02021853), this protein is Cell division inhibitor SulA.